The following is a 309-amino-acid chain: GTPase Era (309 aa).

In terms of domain architecture, Era-type G spans 16 to 186 (HAGFVAIVGK…REQILDALPE (171 aa)). The tract at residues 24 to 31 (GKPNVGKS) is G1. 24 to 31 (GKPNVGKS) contributes to the GTP binding site. The G2 stretch occupies residues 50–54 (QTTRR). The tract at residues 71 to 74 (DTPG) is G3. GTP is bound by residues 71–75 (DTPGL) and 133–136 (NKVD). Residues 133-136 (NKVD) form a G4 region. The segment at 164-166 (LSA) is G5. Residues 217-294 (LREELPYAVA…FLGLEVIVIP (78 aa)) form the KH type-2 domain.

It belongs to the TRAFAC class TrmE-Era-EngA-EngB-Septin-like GTPase superfamily. Era GTPase family. In terms of assembly, monomer.

The protein localises to the cytoplasm. The protein resides in the cell membrane. In terms of biological role, an essential GTPase that binds both GDP and GTP, with rapid nucleotide exchange. Plays a role in 16S rRNA processing and 30S ribosomal subunit biogenesis and possibly also in cell cycle regulation and energy metabolism. The sequence is that of GTPase Era from Deinococcus geothermalis (strain DSM 11300 / CIP 105573 / AG-3a).